The chain runs to 89 residues: Small ribosomal subunit protein uS15 (89 aa).

This sequence belongs to the universal ribosomal protein uS15 family. As to quaternary structure, part of the 30S ribosomal subunit. Forms a bridge to the 50S subunit in the 70S ribosome, contacting the 23S rRNA.

In terms of biological role, one of the primary rRNA binding proteins, it binds directly to 16S rRNA where it helps nucleate assembly of the platform of the 30S subunit by binding and bridging several RNA helices of the 16S rRNA. Forms an intersubunit bridge (bridge B4) with the 23S rRNA of the 50S subunit in the ribosome. This chain is Small ribosomal subunit protein uS15, found in Baumannia cicadellinicola subsp. Homalodisca coagulata.